A 320-amino-acid polypeptide reads, in one-letter code: Glutathione synthetase (320 aa).

Residues 127–312 (KLAITEFPRF…VAGLMIDALE (186 aa)) enclose the ATP-grasp domain. ATP is bound at residue 153–209 (LAEHEDIILKPLDGMGGAGIFRIQNTDHNIGVIIETLTRYGTRTIMAQRFLPEIREG). Glutamate 283 and asparagine 285 together coordinate Mg(2+).

Belongs to the prokaryotic GSH synthase family. Requires Mg(2+) as cofactor. Mn(2+) is required as a cofactor.

It carries out the reaction gamma-L-glutamyl-L-cysteine + glycine + ATP = glutathione + ADP + phosphate + H(+). The protein operates within sulfur metabolism; glutathione biosynthesis; glutathione from L-cysteine and L-glutamate: step 2/2. This chain is Glutathione synthetase, found in Nitrosomonas europaea (strain ATCC 19718 / CIP 103999 / KCTC 2705 / NBRC 14298).